Here is a 185-residue protein sequence, read N- to C-terminus: Hypoxanthine/guanine phosphoribosyltransferase (185 aa).

This sequence belongs to the purine/pyrimidine phosphoribosyltransferase family. Archaeal HPRT subfamily. As to quaternary structure, homodimer.

The protein resides in the cytoplasm. The catalysed reaction is IMP + diphosphate = hypoxanthine + 5-phospho-alpha-D-ribose 1-diphosphate. It carries out the reaction GMP + diphosphate = guanine + 5-phospho-alpha-D-ribose 1-diphosphate. The protein operates within purine metabolism; IMP biosynthesis via salvage pathway; IMP from hypoxanthine: step 1/1. Its function is as follows. Catalyzes a salvage reaction resulting in the formation of IMP that is energically less costly than de novo synthesis. The polypeptide is Hypoxanthine/guanine phosphoribosyltransferase (Methanococcus maripaludis (strain C6 / ATCC BAA-1332)).